We begin with the raw amino-acid sequence, 242 residues long: MSGHSKWHNIQGRKNAQDAKRGKIFQKLSREIYMAAKSGGPDPDGNPTLRMVIDKARSNNMPKDNIKRAIKKAEGGSEEHYDEITYEGYAPGGVAVFVEALTDNKNRTASDVRVAFTRNGGSLGATGSVAYMFDRKGYIVIDRSTTDADEDQVLLDVMDAGGDDLQTSDDAFEIYTDPKQFADVRDALIKDGYKLADAELTMIPQNTTPVPADKKEQFEHLVDALEDSDDVQNVYTAAADED.

Residues 1 to 22 are disordered; that stretch reads MSGHSKWHNIQGRKNAQDAKRG.

This sequence belongs to the TACO1 family.

The protein localises to the cytoplasm. This is Probable transcriptional regulatory protein lhv_0777 from Lactobacillus helveticus (strain DPC 4571).